Reading from the N-terminus, the 178-residue chain is Caveolin-1 (178 aa).

N-acetylserine is present on Ser2. Ser2 carries the phosphoserine modification. The tract at residues Ser2 to Val94 is required for homooligomerization. Residues Ser2–Ser104 are Cytoplasmic-facing. Lys5 carries the N6-acetyllysine; alternate modification. Lys5 is covalently cross-linked (Glycyl lysine isopeptide (Lys-Gly) (interchain with G-Cter in ubiquitin); alternate). The residue at position 6 (Tyr6) is a Phosphotyrosine. The residue at position 9 (Ser9) is a Phosphoserine. Tyr14 carries the phosphotyrosine; by ABL1 modification. Tyr25 carries the post-translational modification Phosphotyrosine. Residues Lys26 and Lys30 each participate in a glycyl lysine isopeptide (Lys-Gly) (interchain with G-Cter in ubiquitin) cross-link. Ser37 carries the phosphoserine modification. Residues Lys39, Lys47, and Lys57 each participate in a glycyl lysine isopeptide (Lys-Gly) (interchain with G-Cter in ubiquitin) cross-link. Residues Asp82 to Val94 are interaction with CAVIN3. The helical intramembrane region spans Ala105–Leu125. Residues His126–Ile178 lie on the Cytoplasmic side of the membrane. An interacts with SPRY1, SPRY2, SPRY3 and SPRY4 region spans residues Val131–Gln142. 3 S-palmitoyl cysteine lipidation sites follow: Cys133, Cys143, and Cys156. Residues Ser149–Phe160 are interacts with SPRY1, SPRY2, and SPRY4. The segment at Phe167–Ile178 is interacts with SPRY1, SPRY2, SPRY3 and SPRY4.

The protein belongs to the caveolin family. In terms of assembly, homooligomer. Interacts with GLIPR2. Interacts with NOSTRIN. Interacts with SNAP25 and STX1A. Interacts (via the N-terminus) with DPP4; the interaction is direct. Interacts with CTNNB1, CDH1 and JUP. Interacts with PACSIN2; this interaction induces membrane tubulation. Interacts with SLC7A9. Interacts with BMX and BTK. Interacts with TGFBR1. Interacts with CAVIN3 (via leucine-zipper domain) in a cholesterol-sensitive manner. Interacts with CAVIN1. Interacts with EHD2 in a cholesterol-dependent manner. Forms a ternary complex with UBXN6 and VCP; mediates CAV1 targeting to lysosomes for degradation. Interacts with ABCG1; this interaction regulates ABCG1-mediated cholesterol efflux. Interacts with NEU3; this interaction enhances NEU3 sialidase activity within caveola. Interacts (via C-terminus) with SPRY1, SPRY2 (via C-terminus), SPRY3, and SPRY4. Interacts with IGFBP5; this interaction allows trafficking of IGFBP5 from the plasma membrane to the nucleus. In terms of processing, phosphorylated at Tyr-14 by ABL1 in response to oxidative stress. Ubiquitinated. Undergo monoubiquitination and multi- and/or polyubiquitination. Monoubiquitination of N-terminal lysines promotes integration in a ternary complex with UBXN6 and VCP which promotes oligomeric CAV1 targeting to lysosomes for degradation. Ubiquitinated by ZNRF1; leading to degradation and modulation of the TLR4-mediated immune response.

It is found in the golgi apparatus membrane. The protein resides in the cell membrane. It localises to the membrane. The protein localises to the caveola. Its subcellular location is the membrane raft. In terms of biological role, may act as a scaffolding protein within caveolar membranes. Forms a stable heterooligomeric complex with CAV2 that targets to lipid rafts and drives caveolae formation. Mediates the recruitment of CAVIN proteins (CAVIN1/2/3/4) to the caveolae. Interacts directly with G-protein alpha subunits and can functionally regulate their activity. Involved in the costimulatory signal essential for T-cell receptor (TCR)-mediated T-cell activation. Its binding to DPP4 induces T-cell proliferation and NF-kappa-B activation in a T-cell receptor/CD3-dependent manner. Recruits CTNNB1 to caveolar membranes and may regulate CTNNB1-mediated signaling through the Wnt pathway. Negatively regulates TGFB1-mediated activation of SMAD2/3 by mediating the internalization of TGFBR1 from membrane rafts leading to its subsequent degradation. Binds 20(S)-hydroxycholesterol (20(S)-OHC). This Aotus nancymaae (Ma's night monkey) protein is Caveolin-1 (CAV1).